The primary structure comprises 170 residues: Large ribosomal subunit protein bL9 (170 aa).

A disordered region spans residues 149–170 (RTEEADAEESAAEEPAVEEAAE). The segment covering 153–170 (ADAEESAAEEPAVEEAAE) has biased composition (acidic residues).

It belongs to the bacterial ribosomal protein bL9 family.

In terms of biological role, binds to the 23S rRNA. In Oleidesulfovibrio alaskensis (strain ATCC BAA-1058 / DSM 17464 / G20) (Desulfovibrio alaskensis), this protein is Large ribosomal subunit protein bL9.